Consider the following 205-residue polypeptide: Large ribosomal subunit protein uL3c (205 aa).

The interval 129-154 (SRGPMSHGSKNHRQPGSIGAGTTPGR) is disordered.

The protein belongs to the universal ribosomal protein uL3 family. In terms of assembly, part of the 50S ribosomal subunit.

The protein localises to the plastid. It localises to the chloroplast. Functionally, one of the primary rRNA binding proteins, it binds directly near the 3'-end of the 23S rRNA, where it nucleates assembly of the 50S subunit. This is Large ribosomal subunit protein uL3c (rpl3) from Pyropia yezoensis (Susabi-nori).